Consider the following 467-residue polypeptide: Chromosomal replication initiator protein DnaA (467 aa).

The segment at 1–79 is domain I, interacts with DnaA modulators; that stretch reads MTELDQFWPA…GELPVELRLG (79 aa). The domain II stretch occupies residues 79–129; sequence GAPTARPAAPVAGNSQPKAKEPAKAAASAPAAPSPAKQAAVKAIGGSHEST. Positions 84-126 are disordered; it reads RPAAPVAGNSQPKAKEPAKAAASAPAAPSPAKQAAVKAIGGSH. Residues 102 to 121 show a composition bias toward low complexity; sequence KAAASAPAAPSPAKQAAVKA. Positions 130-347 are domain III, AAA+ region; the sequence is RLNPSFTFDT…GALKRVVAYA (218 aa). Residues Gly175, Gly177, Lys178, and Thr179 each coordinate ATP. The segment at 348-467 is domain IV, binds dsDNA; the sequence is RFTSQNITLE…YEALLSMLRN (120 aa).

This sequence belongs to the DnaA family. Oligomerizes as a right-handed, spiral filament on DNA at oriC.

Its subcellular location is the cytoplasm. Its function is as follows. Plays an essential role in the initiation and regulation of chromosomal replication. ATP-DnaA binds to the origin of replication (oriC) to initiate formation of the DNA replication initiation complex once per cell cycle. Binds the DnaA box (a 9 base pair repeat at the origin) and separates the double-stranded (ds)DNA. Forms a right-handed helical filament on oriC DNA; dsDNA binds to the exterior of the filament while single-stranded (ss)DNA is stabiized in the filament's interior. The ATP-DnaA-oriC complex binds and stabilizes one strand of the AT-rich DNA unwinding element (DUE), permitting loading of DNA polymerase. After initiation quickly degrades to an ADP-DnaA complex that is not apt for DNA replication. Binds acidic phospholipids. In Chromobacterium violaceum (strain ATCC 12472 / DSM 30191 / JCM 1249 / CCUG 213 / NBRC 12614 / NCIMB 9131 / NCTC 9757 / MK), this protein is Chromosomal replication initiator protein DnaA.